A 182-amino-acid chain; its full sequence is UPF0397 protein YdcD (182 aa).

The next 5 helical transmembrane spans lie at 8-28 (IVVA…LINI), 42-62 (AVLA…IGFI), 74-94 (APWW…AFGV), 114-134 (IVQF…GDVL), and 146-166 (QGIV…TLLL).

This sequence belongs to the UPF0397 family.

It is found in the cell membrane. The sequence is that of UPF0397 protein YdcD (ydcD) from Lactococcus lactis subsp. lactis (strain IL1403) (Streptococcus lactis).